Reading from the N-terminus, the 188-residue chain is MVNLNQSLGDLFKGIIPNVYVLGATIVSFLILFLFITYFVYRPLKKYIKKRKDFLQNHIDLTIKSNVEAEKLEKKSQQKLLETKEFCIELKEKSQIEANEFLEDAKKTAIDNARQLINEGQKVLLEYENEIKSKYYMNVINVAVEICQKYLEKQDKNNKILQQSLIADLEKELKKRENSSKKKDNFGK.

A helical transmembrane segment spans residues 19 to 39 (VYVLGATIVSFLILFLFITYF).

Belongs to the ATPase B chain family. As to quaternary structure, F-type ATPases have 2 components, F(1) - the catalytic core - and F(0) - the membrane proton channel. F(1) has five subunits: alpha(3), beta(3), gamma(1), delta(1), epsilon(1). F(0) has three main subunits: a(1), b(2) and c(10-14). The alpha and beta chains form an alternating ring which encloses part of the gamma chain. F(1) is attached to F(0) by a central stalk formed by the gamma and epsilon chains, while a peripheral stalk is formed by the delta and b chains.

The protein localises to the cell membrane. In terms of biological role, f(1)F(0) ATP synthase produces ATP from ADP in the presence of a proton or sodium gradient. F-type ATPases consist of two structural domains, F(1) containing the extramembraneous catalytic core and F(0) containing the membrane proton channel, linked together by a central stalk and a peripheral stalk. During catalysis, ATP synthesis in the catalytic domain of F(1) is coupled via a rotary mechanism of the central stalk subunits to proton translocation. Functionally, component of the F(0) channel, it forms part of the peripheral stalk, linking F(1) to F(0). The polypeptide is ATP synthase subunit b (Mesomycoplasma hyopneumoniae (strain J / ATCC 25934 / NCTC 10110) (Mycoplasma hyopneumoniae)).